A 706-amino-acid polypeptide reads, in one-letter code: Glutamine-dependent NAD(+) synthetase (706 aa).

Positions 5–275 constitute a CN hydrolase domain; it reads VTVATCALNQ…VEVLTATLDL (271 aa). Glutamate 45 serves as the catalytic Proton acceptor; for glutaminase activity. Residue lysine 114 is the For glutaminase activity of the active site. Cysteine 175 acts as the Nucleophile; for glutaminase activity in catalysis. Residues 325–706 are ligase; sequence YHSPAEEISL…RQRQELDGVD (382 aa). 355–362 lines the ATP pocket; that stretch reads PLSGGVDS. Serine 357 is an active-site residue.

This sequence in the C-terminal section; belongs to the NAD synthetase family. Homohexamer.

The catalysed reaction is deamido-NAD(+) + L-glutamine + ATP + H2O = L-glutamate + AMP + diphosphate + NAD(+) + H(+). It functions in the pathway cofactor biosynthesis; NAD(+) biosynthesis; NAD(+) from deamido-NAD(+) (L-Gln route): step 1/1. Its function is as follows. Catalyzes the ATP-dependent amidation of deamido-NAD to form NAD. Uses L-glutamine as a nitrogen source. In Bos taurus (Bovine), this protein is Glutamine-dependent NAD(+) synthetase (NADSYN1).